Here is a 246-residue protein sequence, read N- to C-terminus: Probable transcriptional regulatory protein ORF2U (246 aa).

This sequence belongs to the TACO1 family.

It is found in the cytoplasm. The chain is Probable transcriptional regulatory protein ORF2U from Hathewaya histolytica (Clostridium histolyticum).